The following is a 159-amino-acid chain: Probable chemoreceptor glutamine deamidase CheD 1 (159 aa).

The protein belongs to the CheD family.

The enzyme catalyses L-glutaminyl-[protein] + H2O = L-glutamyl-[protein] + NH4(+). Functionally, probably deamidates glutamine residues to glutamate on methyl-accepting chemotaxis receptors (MCPs), playing an important role in chemotaxis. The chain is Probable chemoreceptor glutamine deamidase CheD 1 from Methanosarcina acetivorans (strain ATCC 35395 / DSM 2834 / JCM 12185 / C2A).